The sequence spans 341 residues: Tetraacyldisaccharide 4'-kinase (341 aa).

54 to 61 (TVGGAGKT) lines the ATP pocket.

It belongs to the LpxK family.

The enzyme catalyses a lipid A disaccharide + ATP = a lipid IVA + ADP + H(+). It participates in glycolipid biosynthesis; lipid IV(A) biosynthesis; lipid IV(A) from (3R)-3-hydroxytetradecanoyl-[acyl-carrier-protein] and UDP-N-acetyl-alpha-D-glucosamine: step 6/6. Transfers the gamma-phosphate of ATP to the 4'-position of a tetraacyldisaccharide 1-phosphate intermediate (termed DS-1-P) to form tetraacyldisaccharide 1,4'-bis-phosphate (lipid IVA). This chain is Tetraacyldisaccharide 4'-kinase, found in Brucella melitensis biotype 1 (strain ATCC 23456 / CCUG 17765 / NCTC 10094 / 16M).